Consider the following 1148-residue polypeptide: MVKDNRDSDQDQDFSSAHMKRQPEQQQLQQHQFPSKKQRISHHDDSHQINHRPVTSCTHCRQHKIKCDASQNFPHPCSRCEKIGLHCEINPQFRPKKGSQLQLLRQDVDEIKSKLDTLLANDSVFVHLLQQIPMGNSLLNKLNLHPTPTPGTIIPNPDSSPSSGSPTSSAAQRDSKVSVQTYLSREPQLLQANQGSNTNKFKANNEASSHMTLRASSLAQDSKGLVATEPNKLPPLLNDSALPNNSKESLPPALQMAFYKNNSAGNTPNGPFSPIQKTYSPHTTSTTVTTTTNQPPFAATSHVATNNNADRTKTPVVATTTTMPLLPSPHANVDEFVLGDISISIEKANRLHHIFVTRYLPYFPIMYSNNATELYSQSQLLFWTVMLTACLSDPEPTMYCKLSSLIKQLAIETCWIRTPRSTHISQALLILCIWPLPNQKVLDDCSYRFVGLAKSLSYQLGLHRGEFISEFTRTQTSMPNAEKWRTRTWLGIFFAELCWASILGLPPTSQTDYLLEKALSCGDEESEEDNNDSIDNNNNDKRNKKDEPHVESKYKLPGSFRRLLSLANFQAKLSHIIGSSTSSPDGLLEPKYRAETLSILGKELDLLAKTLNFQSDDTVNIYFLYVKLTVCCFAFLPETPPTDQIPYVTEAYLTATKIVTLLNNLLETHQLIELPIYIRQAATFSALILFKLQLTPLLPDKYFDSARQSVVTIHRLYRNQLTAWATSVENDISRTASMLEKLNFVLIMHPEVFVEEDGIISRMRSHLTGSLFYDLVWCVHEARRREMDPEYNKQALEKAAKKRKFSSNGIYNGTSSTGGITDRKLYPLPLYNHISRDDFETVTKTTPSGTTVTTLVPTKNALKQAEKLAKTNNGDSDGSIMEINGIPLSMLGETGSVKFQSLFANTSNSNDYNNNRTLLDASNDISIPSNSIYPVASVPASNNNPQSTKVDYYSNGPSVIPDLSMKRSVSTPVNHFPASVPGLRNHPVGNLSNNVTLGIDHPIPREHSNLQNVTMNYNNQFSNANAIGRSQSSMSHSRTPIASKSNNMTDLHSVVSDPGSSKSTAYPPLSLFSKSNDINSNKTNQRFSTGTNTVTSSNFQTIDNENNVKTPGNKLTDFFQQQSAGWIEGNSSNDDFFGWFDMNMEQGF.

Positions Met1 to His51 are disordered. At Ser8 the chain carries Phosphoserine. Positions Cys57–Cys87 form a DNA-binding region, zn(2)-C6 fungal-type. The disordered stretch occupies residues Pro148–Gln180. Positions Pro150–Ser169 are enriched in low complexity. Ser263 carries the post-translational modification Phosphoserine. Residues Glu524–Val550 form a disordered region. A compositionally biased stretch (basic and acidic residues) spans Asn538–Val550. Position 806 is a phosphoserine (Ser806). A compositionally biased stretch (polar residues) spans Arg1029–Asp1050. Positions Arg1029–Ser1063 are disordered.

The protein localises to the nucleus. Its function is as follows. Putative transcription factor that seems to be involved in the sporulation process. Suppresses the lethal phenotype of RPM2 deletion. This Saccharomyces cerevisiae (strain ATCC 204508 / S288c) (Baker's yeast) protein is Putative transcription factor SEF1 (SEF1).